The sequence spans 790 residues: Phenylalanine--tRNA ligase beta subunit (790 aa).

A tRNA-binding domain is found at 39 to 147 (AKPFSGIVVG…ADAPVGVDVR (109 aa)). The B5 domain occupies 400-476 (PAKALVNLRH…RLYGYNKLPV (77 aa)). Residues D454, D460, E463, and E464 each contribute to the Mg(2+) site. An FDX-ACB domain is found at 696–789 (SRFPEIRRDL…LGNRFGASLR (94 aa)).

This sequence belongs to the phenylalanyl-tRNA synthetase beta subunit family. Type 1 subfamily. As to quaternary structure, tetramer of two alpha and two beta subunits. The cofactor is Mg(2+).

It is found in the cytoplasm. The catalysed reaction is tRNA(Phe) + L-phenylalanine + ATP = L-phenylalanyl-tRNA(Phe) + AMP + diphosphate + H(+). The sequence is that of Phenylalanine--tRNA ligase beta subunit from Hahella chejuensis (strain KCTC 2396).